Reading from the N-terminus, the 141-residue chain is Nucleoside diphosphate kinase (141 aa).

6 residues coordinate ATP: lysine 11, phenylalanine 59, arginine 87, threonine 93, arginine 104, and asparagine 114. Residue histidine 117 is the Pros-phosphohistidine intermediate of the active site.

Belongs to the NDK family. As to quaternary structure, homotetramer. The cofactor is Mg(2+).

It localises to the cytoplasm. The catalysed reaction is a 2'-deoxyribonucleoside 5'-diphosphate + ATP = a 2'-deoxyribonucleoside 5'-triphosphate + ADP. The enzyme catalyses a ribonucleoside 5'-diphosphate + ATP = a ribonucleoside 5'-triphosphate + ADP. Functionally, major role in the synthesis of nucleoside triphosphates other than ATP. The ATP gamma phosphate is transferred to the NDP beta phosphate via a ping-pong mechanism, using a phosphorylated active-site intermediate. The chain is Nucleoside diphosphate kinase from Leptothrix cholodnii (strain ATCC 51168 / LMG 8142 / SP-6) (Leptothrix discophora (strain SP-6)).